Reading from the N-terminus, the 241-residue chain is 3-deoxy-D-manno-octulosonic acid kinase (241 aa).

The active site involves D171.

This sequence belongs to the protein kinase superfamily. KdkA/RfaP family.

It localises to the cell inner membrane. The enzyme catalyses an alpha-Kdo-(2-&gt;6)-lipid IVA + ATP = a 4-O-phospho-alpha-Kdo-(2-&gt;6)-lipid IVA + ADP + H(+). It participates in bacterial outer membrane biogenesis; LPS core biosynthesis. In terms of biological role, catalyzes the ATP-dependent phosphorylation of the 3-deoxy-D-manno-octulosonic acid (Kdo) residue in Kdo-lipid IV(A) at the 4-OH position. In Haemophilus influenzae (strain PittEE), this protein is 3-deoxy-D-manno-octulosonic acid kinase.